A 488-amino-acid polypeptide reads, in one-letter code: Protein nucleotidyltransferase YdiU (488 aa).

Residues Gly-91, Gly-93, Arg-94, Lys-114, Asp-126, Gly-127, Arg-177, and Arg-184 each coordinate ATP. Asp-253 serves as the catalytic Proton acceptor. Residues Asn-254 and Asp-263 each coordinate Mg(2+). Asp-263 contacts ATP.

Belongs to the SELO family. Mg(2+) serves as cofactor. It depends on Mn(2+) as a cofactor.

The enzyme catalyses L-seryl-[protein] + ATP = 3-O-(5'-adenylyl)-L-seryl-[protein] + diphosphate. It carries out the reaction L-threonyl-[protein] + ATP = 3-O-(5'-adenylyl)-L-threonyl-[protein] + diphosphate. It catalyses the reaction L-tyrosyl-[protein] + ATP = O-(5'-adenylyl)-L-tyrosyl-[protein] + diphosphate. The catalysed reaction is L-histidyl-[protein] + UTP = N(tele)-(5'-uridylyl)-L-histidyl-[protein] + diphosphate. The enzyme catalyses L-seryl-[protein] + UTP = O-(5'-uridylyl)-L-seryl-[protein] + diphosphate. It carries out the reaction L-tyrosyl-[protein] + UTP = O-(5'-uridylyl)-L-tyrosyl-[protein] + diphosphate. Functionally, nucleotidyltransferase involved in the post-translational modification of proteins. It can catalyze the addition of adenosine monophosphate (AMP) or uridine monophosphate (UMP) to a protein, resulting in modifications known as AMPylation and UMPylation. This chain is Protein nucleotidyltransferase YdiU, found in Bacillus cereus (strain G9842).